Reading from the N-terminus, the 729-residue chain is Probable cyclic di-GMP phosphodiesterase PdeA (729 aa).

8 helical membrane-spanning segments follow: residues 17–37 (AFTL…LAII), 41–61 (YIFL…IFGW), 83–103 (FLQT…ACAI), 126–146 (FWLG…VGSF), 163–183 (IFTV…NMLF), 214–234 (AFTL…CTPY), 238–258 (FIAG…VGKL), and 289–309 (YSLA…LYMV). The GGDEF domain occupies 348–476 (AGKSFCCLRI…AHHHVLALDS (129 aa)). Positions 488–729 (QVLLLNTIRT…LIGRPQPLAD (242 aa)) constitute an EAL domain.

The protein resides in the cell membrane. It carries out the reaction 3',3'-c-di-GMP + H2O = 5'-phosphoguanylyl(3'-&gt;5')guanosine + H(+). Functionally, phosphodiesterase (PDE) that catalyzes the hydrolysis of cyclic-di-GMP (c-di-GMP) to 5'-pGpG. This is Probable cyclic di-GMP phosphodiesterase PdeA from Escherichia coli (strain K12).